A 184-amino-acid chain; its full sequence is Ribosome-recycling factor (184 aa).

This sequence belongs to the RRF family.

It is found in the cytoplasm. In terms of biological role, responsible for the release of ribosomes from messenger RNA at the termination of protein biosynthesis. May increase the efficiency of translation by recycling ribosomes from one round of translation to another. This chain is Ribosome-recycling factor, found in Aster yellows witches'-broom phytoplasma (strain AYWB).